The following is a 201-amino-acid chain: Translation initiation factor IF-3 (201 aa).

This sequence belongs to the IF-3 family. Monomer.

Its subcellular location is the cytoplasm. IF-3 binds to the 30S ribosomal subunit and shifts the equilibrium between 70S ribosomes and their 50S and 30S subunits in favor of the free subunits, thus enhancing the availability of 30S subunits on which protein synthesis initiation begins. The sequence is that of Translation initiation factor IF-3 from Prochlorococcus marinus (strain SARG / CCMP1375 / SS120).